Consider the following 318-residue polypeptide: Protoheme IX farnesyltransferase (318 aa).

9 helical membrane-spanning segments follow: residues 37–57, 59–79, 108–128, 131–151, 158–178, 183–203, 216–238, 249–269, and 296–316; these read VMEL…RGLP, IWLI…AGAF, EALV…WFGA, LAGL…TLIL, NIVW…AAVT, WPAI…YWPL, VPML…YTWA, LGHA…WFLL, and ISYL…GMPL.

Belongs to the UbiA prenyltransferase family. Protoheme IX farnesyltransferase subfamily.

The protein localises to the cell membrane. It catalyses the reaction heme b + (2E,6E)-farnesyl diphosphate + H2O = Fe(II)-heme o + diphosphate. The protein operates within porphyrin-containing compound metabolism; heme O biosynthesis; heme O from protoheme: step 1/1. Its function is as follows. Converts heme B (protoheme IX) to heme O by substitution of the vinyl group on carbon 2 of heme B porphyrin ring with a hydroxyethyl farnesyl side group. This Renibacterium salmoninarum (strain ATCC 33209 / DSM 20767 / JCM 11484 / NBRC 15589 / NCIMB 2235) protein is Protoheme IX farnesyltransferase.